A 108-amino-acid chain; its full sequence is Nucleoid-associated protein BPP1222 (108 aa).

Residues 86 to 108 are disordered; that stretch reads TSQEKMASVTAGMPLPPGMKLPF. Positions 99–108 are enriched in pro residues; it reads PLPPGMKLPF.

It belongs to the YbaB/EbfC family. Homodimer.

It is found in the cytoplasm. It localises to the nucleoid. Binds to DNA and alters its conformation. May be involved in regulation of gene expression, nucleoid organization and DNA protection. The protein is Nucleoid-associated protein BPP1222 of Bordetella parapertussis (strain 12822 / ATCC BAA-587 / NCTC 13253).